The following is a 278-amino-acid chain: 3-methyl-2-oxobutanoate hydroxymethyltransferase 1 (278 aa).

Asp49 and Asp88 together coordinate Mg(2+). 3-methyl-2-oxobutanoate is bound by residues 49-50 (DS), Asp88, and Lys118. Glu120 is a Mg(2+) binding site. The active-site Proton acceptor is Glu187.

It belongs to the PanB family. Homodecamer; pentamer of dimers. Mg(2+) serves as cofactor.

It is found in the cytoplasm. It carries out the reaction 3-methyl-2-oxobutanoate + (6R)-5,10-methylene-5,6,7,8-tetrahydrofolate + H2O = 2-dehydropantoate + (6S)-5,6,7,8-tetrahydrofolate. The protein operates within cofactor biosynthesis; (R)-pantothenate biosynthesis; (R)-pantoate from 3-methyl-2-oxobutanoate: step 1/2. In terms of biological role, catalyzes the reversible reaction in which hydroxymethyl group from 5,10-methylenetetrahydrofolate is transferred onto alpha-ketoisovalerate to form ketopantoate. This is 3-methyl-2-oxobutanoate hydroxymethyltransferase 1 from Hahella chejuensis (strain KCTC 2396).